A 418-amino-acid chain; its full sequence is Gamma-glutamyl phosphate reductase (418 aa).

Belongs to the gamma-glutamyl phosphate reductase family.

It is found in the cytoplasm. The catalysed reaction is L-glutamate 5-semialdehyde + phosphate + NADP(+) = L-glutamyl 5-phosphate + NADPH + H(+). Its pathway is amino-acid biosynthesis; L-proline biosynthesis; L-glutamate 5-semialdehyde from L-glutamate: step 2/2. Its function is as follows. Catalyzes the NADPH-dependent reduction of L-glutamate 5-phosphate into L-glutamate 5-semialdehyde and phosphate. The product spontaneously undergoes cyclization to form 1-pyrroline-5-carboxylate. The chain is Gamma-glutamyl phosphate reductase from Desulfatibacillum aliphaticivorans.